The chain runs to 288 residues: Damage-control phosphatase AF_1104 (288 aa).

Residues 7-10 (CPSC) carry the Subfamily I CxxC motif motif. Residues D160, N161, and D194 each contribute to the Mn(2+) site. The Subfamily I GNFE-like motif motif lies at 247–250 (ANYE). The short motif at 267 to 268 (KC) is the Subfamily I KC motif element.

The protein belongs to the damage-control phosphatase family. Nucleotides phosphatase I subfamily. The cofactor is [2Fe-2S] cluster. It depends on Mn(2+) as a cofactor. Ni(2+) serves as cofactor.

Its function is as follows. Metal-dependent phosphatase with probable damage-control functions. Could hydrolyze oxidatively damaged purine nucleotides or their biosynthetic intermediates. The polypeptide is Damage-control phosphatase AF_1104 (Archaeoglobus fulgidus (strain ATCC 49558 / DSM 4304 / JCM 9628 / NBRC 100126 / VC-16)).